Reading from the N-terminus, the 415-residue chain is Gamma-glutamyl phosphate reductase (415 aa).

It belongs to the gamma-glutamyl phosphate reductase family.

It is found in the cytoplasm. It carries out the reaction L-glutamate 5-semialdehyde + phosphate + NADP(+) = L-glutamyl 5-phosphate + NADPH + H(+). It functions in the pathway amino-acid biosynthesis; L-proline biosynthesis; L-glutamate 5-semialdehyde from L-glutamate: step 2/2. Catalyzes the NADPH-dependent reduction of L-glutamate 5-phosphate into L-glutamate 5-semialdehyde and phosphate. The product spontaneously undergoes cyclization to form 1-pyrroline-5-carboxylate. This chain is Gamma-glutamyl phosphate reductase, found in Thermotoga petrophila (strain ATCC BAA-488 / DSM 13995 / JCM 10881 / RKU-1).